A 361-amino-acid chain; its full sequence is Allatostatin-A receptor (361 aa).

Over 1–46 (MESTEDEFYTICLNLTAEDPSFGNCNYTTDFENGELLEKVVSRVVP) the chain is Extracellular. Residues asparagine 14 and asparagine 26 are each glycosylated (N-linked (GlcNAc...) asparagine). Residues 47 to 67 (IFFGFIGIVGLVGNALVVLVV) traverse the membrane as a helical segment. The Cytoplasmic segment spans residues 68-78 (AANPGMRSTTN). A helical transmembrane segment spans residues 79–99 (LLIINLAVADLLFVIFCVPFT). The Extracellular portion of the chain corresponds to 100 to 116 (ATDYVMPRWPFGDWWCK). An intrachain disulfide couples cysteine 115 to cysteine 196. Residues 117 to 137 (VVQYFIVVTAHASVYTLVLMS) traverse the membrane as a helical segment. Over 138 to 158 (LDRFMAVVHPIASMSIRTEKN) the chain is Cytoplasmic. A helical membrane pass occupies residues 159–179 (ALLAIACIWVVILTTAIPVGI). Over 180–212 (CHGEREYSYFNRNHSSCVFLEERGYSKLGFQMS) the chain is Extracellular. N-linked (GlcNAc...) asparagine glycosylation occurs at asparagine 192. The helical transmembrane segment at 213–233 (FFLSSYVIPLALISVLYMCML) threads the bilayer. Over 234 to 259 (TRLWKSAPGGRVSAESRRGRKKVTRM) the chain is Cytoplasmic. The helical transmembrane segment at 260-280 (VVVVVVVFAVCWCPIQIILLV) threads the bilayer. The Extracellular portion of the chain corresponds to 281-296 (KALNKYHITYFTVTAQ). The chain crosses the membrane as a helical span at residues 297–317 (IVSHVLAYMNSCVNPVLYAFL). Residues 318-361 (SENFRVAFRKVMYCPPPYNDGFSGRPQATKTTRTGNGNSCHDIV) lie on the Cytoplasmic side of the membrane. A disordered region spans residues 341-361 (GRPQATKTTRTGNGNSCHDIV). Polar residues predominate over residues 343 to 361 (PQATKTTRTGNGNSCHDIV).

The protein belongs to the G-protein coupled receptor 1 family. As to expression, expressed in the midgut and, to a lesser extent, in the fore- and hindgut of fifth instar larvae. Also highly expressed in the brain of fourth and fifth instar larvae.

The protein resides in the cell membrane. Acts as a receptor for A-type allatostatin neuropeptide hormones. This is Allatostatin-A receptor from Bombyx mori (Silk moth).